The sequence spans 254 residues: Probable phosphoglycerate mutase 4 (254 aa).

Residues 10–17 (RHGESTWN) and 23–24 (SC) contribute to the substrate site. Catalysis depends on H11, which acts as the Tele-phosphohistidine intermediate. 2 positions are modified to phosphoserine: S14 and S23. Y26 is modified (phosphotyrosine). Position 31 is a phosphoserine (S31). Substrate contacts are provided by residues R62, 89–92 (ERHY), and K100. E89 serves as the catalytic Proton donor/acceptor. At K106 the chain carries N6-acetyllysine. 116-117 (RR) contacts substrate. At S118 the chain carries Phosphoserine. Residue 187-188 (GN) participates in substrate binding. K251 is subject to N6-acetyllysine; alternate. K251 is modified (N6-succinyllysine; alternate). Residues K253 and K254 each carry the N6-acetyllysine modification.

This sequence belongs to the phosphoglycerate mutase family. BPG-dependent PGAM subfamily.

The catalysed reaction is (2R)-2-phosphoglycerate = (2R)-3-phosphoglycerate. The enzyme catalyses (2R)-3-phospho-glyceroyl phosphate = (2R)-2,3-bisphosphoglycerate + H(+). In Pan troglodytes (Chimpanzee), this protein is Probable phosphoglycerate mutase 4 (PGAM4).